We begin with the raw amino-acid sequence, 454 residues long: Chromosomal replication initiator protein DnaA (454 aa).

The tract at residues 1-81 is domain I, interacts with DnaA modulators; it reads MNNSLWQQCA…PNVVLKVGEA (81 aa). Residues 79–110 are disordered; sequence GEASPTQRDSGSPQRAAATRRKTPNFSSGNTD. Residues 81-117 are domain II; that stretch reads ASPTQRDSGSPQRAAATRRKTPNFSSGNTDVEVPFES. The segment covering 82-91 has biased composition (polar residues); sequence SPTQRDSGSP. The segment at 118-334 is domain III, AAA+ region; the sequence is NIHPEYTFDN…GALNRVVANV (217 aa). 4 residues coordinate ATP: Gly-162, Gly-164, Lys-165, and Thr-166. The domain IV, binds dsDNA stretch occupies residues 335 to 454; the sequence is QLTGRPITID…YRNLIRTLSS (120 aa).

Belongs to the DnaA family. As to quaternary structure, oligomerizes as a right-handed, spiral filament on DNA at oriC.

The protein localises to the cytoplasm. Functionally, plays an essential role in the initiation and regulation of chromosomal replication. ATP-DnaA binds to the origin of replication (oriC) to initiate formation of the DNA replication initiation complex once per cell cycle. Binds the DnaA box (a 9 base pair repeat at the origin) and separates the double-stranded (ds)DNA. Forms a right-handed helical filament on oriC DNA; dsDNA binds to the exterior of the filament while single-stranded (ss)DNA is stabiized in the filament's interior. The ATP-DnaA-oriC complex binds and stabilizes one strand of the AT-rich DNA unwinding element (DUE), permitting loading of DNA polymerase. After initiation quickly degrades to an ADP-DnaA complex that is not apt for DNA replication. Binds acidic phospholipids. The sequence is that of Chromosomal replication initiator protein DnaA from Idiomarina loihiensis (strain ATCC BAA-735 / DSM 15497 / L2-TR).